The chain runs to 136 residues: Galectin-7 (136 aa).

The Galectin domain maps to 6 to 136; it reads HKSSLPEGIR…DVQLDSVRIF (131 aa). 70 to 76 serves as a coordination point for a beta-D-galactoside; that stretch reads WGREERG.

Monomer. As to expression, mainly expressed in stratified squamous epithelium.

It localises to the cytoplasm. It is found in the nucleus. The protein resides in the secreted. In terms of biological role, could be involved in cell-cell and/or cell-matrix interactions necessary for normal growth control. Pro-apoptotic protein that functions intracellularly upstream of JNK activation and cytochrome c release. This is Galectin-7 (LGALS7) from Homo sapiens (Human).